Consider the following 362-residue polypeptide: 3-isopropylmalate dehydrogenase (362 aa).

Position 77-88 (77-88 (GPKWGTGSVRPE)) interacts with NAD(+). Residues Arg-95, Arg-105, Arg-134, and Asp-223 each coordinate substrate. Mg(2+)-binding residues include Asp-223, Asp-248, and Asp-252. NAD(+) is bound at residue 287-298 (GSAPDLPKGKVN).

Belongs to the isocitrate and isopropylmalate dehydrogenases family. Homodimer. Mg(2+) serves as cofactor. Mn(2+) is required as a cofactor.

The protein localises to the cytoplasm. It carries out the reaction (2R,3S)-3-isopropylmalate + NAD(+) = 4-methyl-2-oxopentanoate + CO2 + NADH. It participates in amino-acid biosynthesis; L-leucine biosynthesis; L-leucine from 3-methyl-2-oxobutanoate: step 3/4. Its function is as follows. Catalyzes the oxidation of 3-carboxy-2-hydroxy-4-methylpentanoate (3-isopropylmalate) to 3-carboxy-4-methyl-2-oxopentanoate. The product decarboxylates to 4-methyl-2 oxopentanoate. The polypeptide is 3-isopropylmalate dehydrogenase (LEU2) (Zygosaccharomyces rouxii (strain ATCC 2623 / CBS 732 / NBRC 1130 / NCYC 568 / NRRL Y-229)).